Consider the following 143-residue polypeptide: Large ribosomal subunit protein uL16c (143 aa).

Belongs to the universal ribosomal protein uL16 family. Part of the 50S ribosomal subunit.

It is found in the plastid. The protein localises to the chloroplast. The polypeptide is Large ribosomal subunit protein uL16c (Chlorokybus atmophyticus (Soil alga)).